A 502-amino-acid polypeptide reads, in one-letter code: ATP synthase subunit alpha (502 aa).

169-176 (GDRQTGKT) contributes to the ATP binding site.

The protein belongs to the ATPase alpha/beta chains family. In terms of assembly, F-type ATPases have 2 components, CF(1) - the catalytic core - and CF(0) - the membrane proton channel. CF(1) has five subunits: alpha(3), beta(3), gamma(1), delta(1), epsilon(1). CF(0) has three main subunits: a(1), b(2) and c(9-12). The alpha and beta chains form an alternating ring which encloses part of the gamma chain. CF(1) is attached to CF(0) by a central stalk formed by the gamma and epsilon chains, while a peripheral stalk is formed by the delta and b chains.

It localises to the cell inner membrane. It catalyses the reaction ATP + H2O + 4 H(+)(in) = ADP + phosphate + 5 H(+)(out). In terms of biological role, produces ATP from ADP in the presence of a proton gradient across the membrane. The alpha chain is a regulatory subunit. This Geotalea daltonii (strain DSM 22248 / JCM 15807 / FRC-32) (Geobacter daltonii) protein is ATP synthase subunit alpha.